A 347-amino-acid chain; its full sequence is tRNA pseudouridine synthase D (347 aa).

Catalysis depends on Asp-81, which acts as the Nucleophile. The TRUD domain maps to 158–304 (GVPNYFGNQR…MRHDRRAIAL (147 aa)).

The protein belongs to the pseudouridine synthase TruD family.

The catalysed reaction is uridine(13) in tRNA = pseudouridine(13) in tRNA. Responsible for synthesis of pseudouridine from uracil-13 in transfer RNAs. This chain is tRNA pseudouridine synthase D, found in Vibrio vulnificus (strain YJ016).